A 495-amino-acid chain; its full sequence is Alpha,alpha-trehalose-phosphate synthase [UDP-forming] 56 kDa subunit (495 aa).

Residues tyrosine 102 and aspartate 156 each coordinate D-glucose 6-phosphate. UDP contacts are provided by arginine 293 and lysine 298. UDP-alpha-D-glucose is bound by residues arginine 293 and lysine 298. Arginine 331 serves as a coordination point for D-glucose 6-phosphate. Residues isoleucine 370 and 396–400 each bind UDP; that span reads LVSYE. UDP-alpha-D-glucose contacts are provided by residues isoleucine 370 and 392–400; that span reads DGMNLVSYE.

Belongs to the glycosyltransferase 20 family. The trehalose synthase complex is composed of the two catalytic subunits TPS1 and TPS2 and at least one of the two regulatory subunits TPS3 or TSL1.

The protein resides in the cytoplasm. The enzyme catalyses D-glucose 6-phosphate + UDP-alpha-D-glucose = alpha,alpha-trehalose 6-phosphate + UDP + H(+). Its pathway is carbohydrate biosynthesis. Activated by fructose 6-phosphate. Inorganic phosphate inhibits the synthase activity in the complex, but activates the synthase activity in the free monomeric form. Its function is as follows. Synthase catalytic subunit of the trehalose synthase complex that catalyzes the production of trehalose from glucose-6-phosphate and UDP-alpha-D-glucose in a two step process. Can function independently of the complex. The polypeptide is Alpha,alpha-trehalose-phosphate synthase [UDP-forming] 56 kDa subunit (Saccharomyces cerevisiae (strain ATCC 204508 / S288c) (Baker's yeast)).